The primary structure comprises 369 residues: Cyanuric acid amidohydrolase (369 aa).

An RU A region spans residues 1–100 (MPRRAEILRL…HWLVIAAREA (100 aa)). Substrate-binding positions include Arg53 and 81-82 (SG). The interval 106–242 (ALAVGQARTP…HEVVVMGMSP (137 aa)) is RU B. The active site involves Lys155. Residues Arg187 and 225–226 (SA) each bind substrate. The active-site Nucleophile is Ser225. The interval 248–369 (LVIDHAVMAD…ARRSGAAGPA (122 aa)) is RU C. Glu296 contributes to the Mg(2+) binding site. Substrate contacts are provided by residues Arg323 and 342–343 (SG). Ala345, Gln348, Gly349, Pro350, and Gly353 together coordinate Mg(2+).

Belongs to the cyclic amide hydrolase (CyAH) family. As to quaternary structure, homotetramer.

The enzyme catalyses cyanurate + H2O = 1-carboxybiuret + H(+). It participates in xenobiotic degradation; atrazine degradation; biuret from cyanurate: step 1/1. Inhibited by barbituric acid. In terms of biological role, responsible for the hydrolysis of cyanuric acid, an intermediate formed during catabolism of s-triazine based compounds in herbicides such as atrazine and polymers such as melamine. Catalyzes the hydrolytic opening of the s-triazine ring of cyanuric acid (2,4,6-trihydroxy-s-triazine) to yield carbon dioxide and carboxybiuret, which spontaneously decarboxylates to biuret. In Methylobacterium sp. (strain 4-46), this protein is Cyanuric acid amidohydrolase.